A 332-amino-acid polypeptide reads, in one-letter code: Putative ketol-acid reductoisomerase 3 (332 aa).

The region spanning 1-182 is the KARI N-terminal Rossmann domain; the sequence is MDKTVLDASL…AIPGGIAVIS (182 aa). Residues 183–329 enclose the KARI C-terminal knotted domain; the sequence is SFEEEALLDL…KELYKILRRK (147 aa).

Belongs to the ketol-acid reductoisomerase family.

It carries out the reaction (2R)-2,3-dihydroxy-3-methylbutanoate + NADP(+) = (2S)-2-acetolactate + NADPH + H(+). The catalysed reaction is (2R,3R)-2,3-dihydroxy-3-methylpentanoate + NADP(+) = (S)-2-ethyl-2-hydroxy-3-oxobutanoate + NADPH + H(+). It participates in amino-acid biosynthesis; L-isoleucine biosynthesis; L-isoleucine from 2-oxobutanoate: step 2/4. It functions in the pathway amino-acid biosynthesis; L-valine biosynthesis; L-valine from pyruvate: step 2/4. The sequence is that of Putative ketol-acid reductoisomerase 3 (ilvC3) from Saccharolobus solfataricus (strain ATCC 35092 / DSM 1617 / JCM 11322 / P2) (Sulfolobus solfataricus).